The sequence spans 247 residues: STING ER exit protein (247 aa).

The residue at position 127 (serine 127) is a Phosphoserine. Residues 195–216 adopt a coiled-coil conformation; it reads EAREIADSYANNARIIEKQLQR. The segment at 215–247 is disordered; it reads QRKGGKLSDVGIKTKTEDAPPPQKKQRGTLLER.

It belongs to the STEEP1 family.

Molecular adapter that stimulates membrane curvature formation and subsequent endoplasmic reticulum exit site (ERES) establishment by recruiting PI3K complex I, leading to COPII vesicle-mediated transport. The polypeptide is STING ER exit protein (Drosophila melanogaster (Fruit fly)).